The following is a 258-amino-acid chain: Imidazole glycerol phosphate synthase subunit HisF (258 aa).

Active-site residues include aspartate 11 and aspartate 130.

It belongs to the HisA/HisF family. Heterodimer of HisH and HisF.

The protein resides in the cytoplasm. It carries out the reaction 5-[(5-phospho-1-deoxy-D-ribulos-1-ylimino)methylamino]-1-(5-phospho-beta-D-ribosyl)imidazole-4-carboxamide + L-glutamine = D-erythro-1-(imidazol-4-yl)glycerol 3-phosphate + 5-amino-1-(5-phospho-beta-D-ribosyl)imidazole-4-carboxamide + L-glutamate + H(+). It functions in the pathway amino-acid biosynthesis; L-histidine biosynthesis; L-histidine from 5-phospho-alpha-D-ribose 1-diphosphate: step 5/9. IGPS catalyzes the conversion of PRFAR and glutamine to IGP, AICAR and glutamate. The HisF subunit catalyzes the cyclization activity that produces IGP and AICAR from PRFAR using the ammonia provided by the HisH subunit. The sequence is that of Imidazole glycerol phosphate synthase subunit HisF from Escherichia coli O7:K1 (strain IAI39 / ExPEC).